Here is a 423-residue protein sequence, read N- to C-terminus: Glutamate-1-semialdehyde 2,1-aminomutase (423 aa).

At Lys266 the chain carries N6-(pyridoxal phosphate)lysine.

Belongs to the class-III pyridoxal-phosphate-dependent aminotransferase family. HemL subfamily. In terms of assembly, homodimer. Pyridoxal 5'-phosphate is required as a cofactor.

It localises to the cytoplasm. It catalyses the reaction (S)-4-amino-5-oxopentanoate = 5-aminolevulinate. Its pathway is porphyrin-containing compound metabolism; protoporphyrin-IX biosynthesis; 5-aminolevulinate from L-glutamyl-tRNA(Glu): step 2/2. The polypeptide is Glutamate-1-semialdehyde 2,1-aminomutase (Nitratidesulfovibrio vulgaris (strain DP4) (Desulfovibrio vulgaris)).